A 767-amino-acid polypeptide reads, in one-letter code: 5-methyltetrahydropteroyltriglutamate--homocysteine methyltransferase (767 aa).

Residues 17–20 (RELK) and lysine 117 contribute to the 5-methyltetrahydropteroyltri-L-glutamate site. Residues 441–443 (IGS) and glutamate 494 each bind L-homocysteine. Residues 441–443 (IGS) and glutamate 494 contribute to the L-methionine site. 5-methyltetrahydropteroyltri-L-glutamate is bound by residues 525 to 526 (RC) and tryptophan 571. Residue aspartate 609 participates in L-homocysteine binding. Aspartate 609 lines the L-methionine pocket. Glutamate 615 lines the 5-methyltetrahydropteroyltri-L-glutamate pocket. Positions 652, 654, and 676 each coordinate Zn(2+). Histidine 705 functions as the Proton donor in the catalytic mechanism. Cysteine 737 is a Zn(2+) binding site.

Belongs to the vitamin-B12 independent methionine synthase family. It depends on Zn(2+) as a cofactor.

It carries out the reaction 5-methyltetrahydropteroyltri-L-glutamate + L-homocysteine = tetrahydropteroyltri-L-glutamate + L-methionine. It functions in the pathway amino-acid biosynthesis; L-methionine biosynthesis via de novo pathway; L-methionine from L-homocysteine (MetE route): step 1/1. Catalyzes the transfer of a methyl group from 5-methyltetrahydrofolate to homocysteine resulting in methionine formation. The chain is 5-methyltetrahydropteroyltriglutamate--homocysteine methyltransferase from Bifidobacterium longum (strain NCC 2705).